We begin with the raw amino-acid sequence, 1131 residues long: Translation initiation factor IF-2 (1131 aa).

A disordered region spans residues 49–542 (KFKGSVSSNE…AFIMPKPQQS (494 aa)). Positions 60–75 (KSIDNGKASRVEKPEK) are enriched in basic and acidic residues. Composition is skewed to polar residues over residues 76–88 (NNSV…QTPS) and 108–125 (SEQN…NIQS). Residues 127-138 (GDRKYQHTDRRP) show a composition bias toward basic and acidic residues. A compositionally biased stretch (polar residues) spans 139-152 (QGNNGEGPQTSTNS). 2 stretches are compositionally biased toward basic and acidic residues: residues 164–180 (GDRR…RPYN) and 223–239 (GDRR…RPYN). Residues 411-436 (GQGGYGGRPQGQGSYGGRPQGQGGYA) are compositionally biased toward gly residues. 2 stretches are compositionally biased toward basic and acidic residues: residues 450 to 479 (KDFD…KSSI) and 487 to 530 (LTKE…DPNR). The 170-residue stretch at 632–801 (KRPPVVCVMG…ILTAEMGELK (170 aa)) folds into the tr-type G domain. The tract at residues 641–648 (GHVDHGKT) is G1. A GTP-binding site is contributed by 641–648 (GHVDHGKT). The segment at 666–670 (GITQH) is G2. The G3 stretch occupies residues 687 to 690 (DTPG). GTP is bound by residues 687 to 691 (DTPGH) and 741 to 744 (NKID). The tract at residues 741–744 (NKID) is G4. The tract at residues 777 to 779 (SAH) is G5.

It belongs to the TRAFAC class translation factor GTPase superfamily. Classic translation factor GTPase family. IF-2 subfamily.

It is found in the cytoplasm. In terms of biological role, one of the essential components for the initiation of protein synthesis. Protects formylmethionyl-tRNA from spontaneous hydrolysis and promotes its binding to the 30S ribosomal subunits. Also involved in the hydrolysis of GTP during the formation of the 70S ribosomal complex. This is Translation initiation factor IF-2 from Lachnoclostridium phytofermentans (strain ATCC 700394 / DSM 18823 / ISDg) (Clostridium phytofermentans).